Reading from the N-terminus, the 273-residue chain is MSYLLDPSRKTVTITRLQAMRDAGEKIAMLTAYDSSFAALLDYCGVEVILVGDSLGNVMQGQQTTLPVTLEHMAYHTECVARANQTALLVTDLPFGTYGTPEMAFASAVTLMRAGAHMVKLEGGDWLAPTVKFLVERSIPVCAHIGLTPQSVHAFGGFKVQGKTDEGAAQLRRDAQAMEAAGAQIVLMEAVPATLAGEITQMLKVPTIGIGAGADCSGQVLVLQDMINVYPGRKAKFVRNFMDGQTTIEGAIRAYVAAVKDGSFPAAEHTFSA.

Mg(2+)-binding residues include Asp53 and Asp92. Residues 53–54 (DS), Asp92, and Lys120 contribute to the 3-methyl-2-oxobutanoate site. Residue Glu122 coordinates Mg(2+). The active-site Proton acceptor is the Glu189.

This sequence belongs to the PanB family. As to quaternary structure, homodecamer; pentamer of dimers. Mg(2+) serves as cofactor.

Its subcellular location is the cytoplasm. The catalysed reaction is 3-methyl-2-oxobutanoate + (6R)-5,10-methylene-5,6,7,8-tetrahydrofolate + H2O = 2-dehydropantoate + (6S)-5,6,7,8-tetrahydrofolate. The protein operates within cofactor biosynthesis; (R)-pantothenate biosynthesis; (R)-pantoate from 3-methyl-2-oxobutanoate: step 1/2. Catalyzes the reversible reaction in which hydroxymethyl group from 5,10-methylenetetrahydrofolate is transferred onto alpha-ketoisovalerate to form ketopantoate. The protein is 3-methyl-2-oxobutanoate hydroxymethyltransferase of Cupriavidus pinatubonensis (strain JMP 134 / LMG 1197) (Cupriavidus necator (strain JMP 134)).